The following is a 291-amino-acid chain: Asialoglycoprotein receptor 1 (291 aa).

The span at 1-19 shows a compositional bias: basic and acidic residues; it reads MTKECQDLQHLDNEESDHH. The segment at 1 to 27 is disordered; that stretch reads MTKECQDLQHLDNEESDHHQLRKGPPP. Over 1–40 the chain is Cytoplasmic; sequence MTKECQDLQHLDNEESDHHQLRKGPPPSQPLLQRLCSGPR. The Endocytosis signal motif lies at 5-8; it reads CQDL. At Ser16 the chain carries Phosphoserine. The S-palmitoyl cysteine moiety is linked to residue Cys36. A helical; Signal-anchor for type II membrane protein transmembrane segment spans residues 41-61; that stretch reads LLLLSLGLSLLLLVVVCVIGS. Residues 61-123 adopt a coiled-coil conformation; the sequence is SQNSQLQKEL…KDLSEDHSSL (63 aa). Topologically, residues 62-291 are extracellular; that stretch reads QNSQLQKELR…DKASQEPPLL (230 aa). Residues Asn79 and Asn147 are each glycosylated (N-linked (GlcNAc...) asparagine). 3 cysteine pairs are disulfide-bonded: Cys154-Cys165, Cys182-Cys277, and Cys255-Cys269. Positions 161–278 constitute a C-type lectin domain; it reads HERSCYWFSR…CQRPYRWVCE (118 aa). Ca(2+)-binding residues include Val191, Glu197, Asp216, Gln240, Asp242, Asp243, Glu253, Asp254, Asn265, Asp266, and Glu278. Phosphoserine is present on Ser285.

As to quaternary structure, interacts with LASS2. In terms of processing, phosphorylated on a cytoplasmic Ser residue.

It localises to the membrane. In terms of biological role, mediates the endocytosis of plasma glycoproteins to which the terminal sialic acid residue on their complex carbohydrate moieties has been removed. The receptor recognizes terminal galactose and N-acetylgalactosamine units. After ligand binding to the receptor, the resulting complex is internalized and transported to a sorting organelle, where receptor and ligand are disassociated. The receptor then returns to the cell membrane surface. This is Asialoglycoprotein receptor 1 (ASGR1) from Pongo abelii (Sumatran orangutan).